Consider the following 76-residue polypeptide: Mu-scoloptoxin(15)-Ssm1a (76 aa).

Residues 1 to 23 form the signal peptide; it reads MEKKIIFLVFLVALLALPGFIST. The important for inhibition of KCNQ4 stretch occupies residues 33 to 36; the sequence is KKRK. Disulfide bonds link cysteine 43/cysteine 69 and cysteine 47/cysteine 71.

This sequence belongs to the scoloptoxin-15 family. In terms of tissue distribution, expressed by the venom gland.

It localises to the secreted. Blocks voltage-gated potassium channels Kv7.4/KCNQ4 (IC(50)=2.5 uM), Kv7.1/KCNQ1 (IC(50)=2.8 uM), Kv7.2/KCNQ2 (IC(50)=2.7 uM) and Kv7.5/KCNQ5 (IC(50)=2.7 uM). Targets the pore domain, in particular negatively charged residues 'Asp-266' and 'Asp-288', of KCNQ4 and probably other KCNQ channel family members where these residues are conserved. In vivo, shows vasoconstrictive activity resulting in acute hypertension when injected intravenously in mice. Also induces coronary vasospasms ultimately leading to heart failure. Induces seizures when injected into the hippocampus of mice. Decreases respiratory rate while increasing respiratory amplitude, probably by triggering a contraction of the bronchial ring. This is Mu-scoloptoxin(15)-Ssm1a from Scolopendra mutilans (Chinese red-headed centipede).